A 467-amino-acid polypeptide reads, in one-letter code: Asparagine--tRNA ligase (467 aa).

This sequence belongs to the class-II aminoacyl-tRNA synthetase family. As to quaternary structure, homodimer.

The protein localises to the cytoplasm. The catalysed reaction is tRNA(Asn) + L-asparagine + ATP = L-asparaginyl-tRNA(Asn) + AMP + diphosphate + H(+). In Phocaeicola vulgatus (strain ATCC 8482 / DSM 1447 / JCM 5826 / CCUG 4940 / NBRC 14291 / NCTC 11154) (Bacteroides vulgatus), this protein is Asparagine--tRNA ligase.